Reading from the N-terminus, the 237-residue chain is Phosphoribosylaminoimidazole-succinocarboxamide synthase (237 aa).

The protein belongs to the SAICAR synthetase family.

The enzyme catalyses 5-amino-1-(5-phospho-D-ribosyl)imidazole-4-carboxylate + L-aspartate + ATP = (2S)-2-[5-amino-1-(5-phospho-beta-D-ribosyl)imidazole-4-carboxamido]succinate + ADP + phosphate + 2 H(+). The protein operates within purine metabolism; IMP biosynthesis via de novo pathway; 5-amino-1-(5-phospho-D-ribosyl)imidazole-4-carboxamide from 5-amino-1-(5-phospho-D-ribosyl)imidazole-4-carboxylate: step 1/2. The protein is Phosphoribosylaminoimidazole-succinocarboxamide synthase of Enterobacter sp. (strain 638).